We begin with the raw amino-acid sequence, 302 residues long: Probable 5-dehydro-4-deoxyglucarate dehydratase (302 aa).

The protein belongs to the DapA family.

It catalyses the reaction 5-dehydro-4-deoxy-D-glucarate + H(+) = 2,5-dioxopentanoate + CO2 + H2O. Its pathway is carbohydrate acid metabolism; D-glucarate degradation; 2,5-dioxopentanoate from D-glucarate: step 2/2. This is Probable 5-dehydro-4-deoxyglucarate dehydratase from Rhizobium rhizogenes (strain K84 / ATCC BAA-868) (Agrobacterium radiobacter).